A 137-amino-acid polypeptide reads, in one-letter code: Large ribosomal subunit protein uL16 (137 aa).

The tract at residues 1–20 (MLQPSNRKYRKDFKGRNRGV) is disordered. The segment covering 7–17 (RKYRKDFKGRN) has biased composition (basic residues).

The protein belongs to the universal ribosomal protein uL16 family. Part of the 50S ribosomal subunit.

In terms of biological role, binds 23S rRNA and is also seen to make contacts with the A and possibly P site tRNAs. The chain is Large ribosomal subunit protein uL16 from Coxiella burnetii (strain CbuK_Q154) (Coxiella burnetii (strain Q154)).